Here is a 295-residue protein sequence, read N- to C-terminus: tRNA dimethylallyltransferase (295 aa).

11–18 is a binding site for ATP; it reads GPTVSGKS. 13 to 18 lines the substrate pocket; sequence TVSGKS. Interaction with substrate tRNA regions lie at residues 36–39 and 158–162; these read DSMQ and QRIIR.

It belongs to the IPP transferase family. In terms of assembly, monomer. Mg(2+) is required as a cofactor.

It catalyses the reaction adenosine(37) in tRNA + dimethylallyl diphosphate = N(6)-dimethylallyladenosine(37) in tRNA + diphosphate. Functionally, catalyzes the transfer of a dimethylallyl group onto the adenine at position 37 in tRNAs that read codons beginning with uridine, leading to the formation of N6-(dimethylallyl)adenosine (i(6)A). This is tRNA dimethylallyltransferase from Bartonella quintana (strain Toulouse) (Rochalimaea quintana).